The sequence spans 187 residues: Large ribosomal subunit protein uL5 (187 aa).

This sequence belongs to the universal ribosomal protein uL5 family. As to quaternary structure, part of the 50S ribosomal subunit; part of the 5S rRNA/L5/L18/L25 subcomplex. Contacts the 5S rRNA and the P site tRNA. Forms a bridge to the 30S subunit in the 70S ribosome.

Its function is as follows. This is one of the proteins that bind and probably mediate the attachment of the 5S RNA into the large ribosomal subunit, where it forms part of the central protuberance. In the 70S ribosome it contacts protein S13 of the 30S subunit (bridge B1b), connecting the 2 subunits; this bridge is implicated in subunit movement. Contacts the P site tRNA; the 5S rRNA and some of its associated proteins might help stabilize positioning of ribosome-bound tRNAs. This is Large ribosomal subunit protein uL5 from Mycolicibacterium smegmatis (strain ATCC 700084 / mc(2)155) (Mycobacterium smegmatis).